We begin with the raw amino-acid sequence, 271 residues long: Tryptophan synthase alpha chain (271 aa).

Residues Glu49 and Asp60 each act as proton acceptor in the active site.

This sequence belongs to the TrpA family. Tetramer of two alpha and two beta chains.

The enzyme catalyses (1S,2R)-1-C-(indol-3-yl)glycerol 3-phosphate + L-serine = D-glyceraldehyde 3-phosphate + L-tryptophan + H2O. Its pathway is amino-acid biosynthesis; L-tryptophan biosynthesis; L-tryptophan from chorismate: step 5/5. Its function is as follows. The alpha subunit is responsible for the aldol cleavage of indoleglycerol phosphate to indole and glyceraldehyde 3-phosphate. The polypeptide is Tryptophan synthase alpha chain (Leptothrix cholodnii (strain ATCC 51168 / LMG 8142 / SP-6) (Leptothrix discophora (strain SP-6))).